Consider the following 124-residue polypeptide: p53-regulated apoptosis-inducing protein 1 (124 aa).

A compositionally biased stretch (polar residues) spans 1–16 (MGSSSEASFRSAQASC). Positions 1 to 46 (MGSSSEASFRSAQASCSGARRQGLGRGDQNLSVMPPNGRAQTHTPG) are disordered.

In terms of tissue distribution, only found to be expressed in thymus.

Its subcellular location is the mitochondrion. In terms of biological role, may play an important role in mediating p53/TP53-dependent apoptosis. The protein is p53-regulated apoptosis-inducing protein 1 (TP53AIP1) of Homo sapiens (Human).